The sequence spans 199 residues: Chaperone protein TorD (199 aa).

Belongs to the TorD/DmsD family. TorD subfamily.

The protein localises to the cytoplasm. Involved in the biogenesis of TorA. Acts on TorA before the insertion of the molybdenum cofactor and, as a result, probably favors a conformation of the apoenzyme that is competent for acquiring the cofactor. The chain is Chaperone protein TorD from Shigella boydii serotype 18 (strain CDC 3083-94 / BS512).